Consider the following 336-residue polypeptide: Anthranilate phosphoribosyltransferase (336 aa).

Residues Gly-78, 81-82 (GD), Thr-86, 88-91 (NVST), 106-114 (KHGNYSVSS), and Ser-118 each bind 5-phospho-alpha-D-ribose 1-diphosphate. Gly-78 is an anthranilate binding site. Ser-90 is a binding site for Mg(2+). Asn-109 lines the anthranilate pocket. Arg-164 lines the anthranilate pocket. The Mg(2+) site is built by Asp-222 and Glu-223.

This sequence belongs to the anthranilate phosphoribosyltransferase family. In terms of assembly, homodimer. Requires Mg(2+) as cofactor.

It catalyses the reaction N-(5-phospho-beta-D-ribosyl)anthranilate + diphosphate = 5-phospho-alpha-D-ribose 1-diphosphate + anthranilate. It functions in the pathway amino-acid biosynthesis; L-tryptophan biosynthesis; L-tryptophan from chorismate: step 2/5. Functionally, catalyzes the transfer of the phosphoribosyl group of 5-phosphorylribose-1-pyrophosphate (PRPP) to anthranilate to yield N-(5'-phosphoribosyl)-anthranilate (PRA). This is Anthranilate phosphoribosyltransferase from Halobacterium salinarum (strain ATCC 29341 / DSM 671 / R1).